Consider the following 98-residue polypeptide: Small ribosomal subunit protein uS19 (98 aa).

The disordered stretch occupies residues 74-98 (FAPTRNYRGHAGGKSEKGGSAPRKK).

This sequence belongs to the universal ribosomal protein uS19 family.

Protein S19 forms a complex with S13 that binds strongly to the 16S ribosomal RNA. This chain is Small ribosomal subunit protein uS19, found in Chlorobium chlorochromatii (strain CaD3).